The primary structure comprises 473 residues: Beta-secretase 1 (473 aa).

An N-terminal signal peptide occupies residues 1–21; that stretch reads MAPALPWLLLWVGSGVLPVHG. The propeptide occupies 22–45; the sequence is TQDGIRLPLRSGLAGAPLGLRLPR. The Extracellular portion of the chain corresponds to 22–429; sequence TQDGIRLPLR…PQTDESTLMT (408 aa). In terms of domain architecture, Peptidase A1 spans 72 to 388; it reads YYVEMTVGSP…DRARKRIGFA (317 aa). Residue aspartate 90 is part of the active site. Lysine 123 is modified (N6-acetyllysine). N-linked (GlcNAc...) asparagine glycosylation is found at asparagine 150, asparagine 169, and asparagine 195. 3 disulfide bridges follow: cysteine 188/cysteine 392, cysteine 250/cysteine 415, and cysteine 302/cysteine 352. 3 positions are modified to N6-acetyllysine: lysine 247, lysine 251, and lysine 257. Residue aspartate 261 is part of the active site. N6-acetyllysine occurs at positions 271, 272, and 279. Asparagine 326 carries an N-linked (GlcNAc...) asparagine glycan. A helical transmembrane segment spans residues 430-450; that stretch reads IAYVMAAICALFMLPLCLMVC. S-palmitoyl cysteine attachment occurs at residues cysteine 446, cysteine 450, cysteine 454, and cysteine 457. The Cytoplasmic portion of the chain corresponds to 451–473; sequence QWRCLRCLRHQHDDFADDISLLK. The interaction with RTN3 stretch occupies residues 451–473; that stretch reads QWRCLRCLRHQHDDFADDISLLK. The short motif at 468 to 472 is the DXXLL element; the sequence is DISLL. Serine 470 carries the post-translational modification Phosphoserine. Lysine 473 participates in a covalent cross-link: Glycyl lysine isopeptide (Lys-Gly) (interchain with G-Cter in ubiquitin).

This sequence belongs to the peptidase A1 family. Monomer. Interacts (via DXXLL motif) with GGA1, GGA2 and GGA3 (via their VHS domain); the interaction highly increases when BACE1 is phosphorylated at Ser-470. Interacts with RTN1; RTN2; RTN3 and RTN4; the interaction leads to inhibition of amyloid precursor protein processing. Interacts with SNX6. Interacts with PCSK9. Interacts with NAT8 and NAT8B. Interacts with BIN1. Interacts (via extracellular domain) with ADAM10 (via extracellular domain). Interacts with SORL1; this interaction may affect binding with APP and hence reduce APP cleavage. Interacts with NRDC AND NRG1. In terms of processing, palmitoylation mediates lipid raft localization. Post-translationally, acetylated in the endoplasmic reticulum at Lys-123, Lys-247, Lys-251, Lys-257, Lys-271, Lys-272, and Lys-279. Acetylation by NAT8 and NAT8B is transient and deacetylation probably occurs in the Golgi. Acetylation regulates the maturation, the transport to the plasma membrane, the stability and the expression of the protein. Ubiquitinated at Lys-473, ubiquitination leads to lysosomal degradation. Monoubiquitinated and 'Lys-63'-linked polyubitinated. Deubiquitnated by USP8; inhibits lysosomal degradation. In terms of processing, phosphorylation at Ser-470 is required for interaction with GGA1 and retrograded transport from endosomal compartments to the trans-Golgi network. Non-phosphorylated BACE1 enters a direct recycling route to the cell surface. Post-translationally, N-Glycosylated. Addition of a bisecting N-acetylglucosamine by MGAT3 blocks lysosomal targeting, further degradation and is required for maintaining stability under stress conditions.

The protein resides in the cell membrane. Its subcellular location is the golgi apparatus. It is found in the trans-Golgi network. The protein localises to the endoplasmic reticulum. It localises to the endosome. The protein resides in the cell surface. Its subcellular location is the cytoplasmic vesicle membrane. It is found in the membrane raft. The protein localises to the lysosome. It localises to the late endosome. The protein resides in the early endosome. Its subcellular location is the recycling endosome. It is found in the cell projection. The protein localises to the axon. It localises to the dendrite. It carries out the reaction Broad endopeptidase specificity. Cleaves Glu-Val-Asn-Leu-|-Asp-Ala-Glu-Phe in the Swedish variant of Alzheimer's amyloid precursor protein.. Its activity is regulated as follows. Inhibited by RTN3 and RTN4. Responsible for the proteolytic processing of the amyloid precursor protein (APP). Cleaves at the N-terminus of the A-beta peptide sequence, between residues 671 and 672 of APP, leads to the generation and extracellular release of beta-cleaved soluble APP, and a corresponding cell-associated C-terminal fragment which is later released by gamma-secretase. Cleaves CHL1. The polypeptide is Beta-secretase 1 (BACE1) (Cavia porcellus (Guinea pig)).